The sequence spans 204 residues: Cytochrome c biogenesis ATP-binding export protein CcmA (204 aa).

The ABC transporter domain maps to 2 to 204; the sequence is IEVRDLGVSR…LDAEDLGGFL (203 aa). An ATP-binding site is contributed by 34–41; sequence GPNGIGKT.

It belongs to the ABC transporter superfamily. CcmA exporter (TC 3.A.1.107) family. As to quaternary structure, the complex is composed of two ATP-binding proteins (CcmA) and two transmembrane proteins (CcmB).

It localises to the cell inner membrane. The catalysed reaction is heme b(in) + ATP + H2O = heme b(out) + ADP + phosphate + H(+). Functionally, part of the ABC transporter complex CcmAB involved in the biogenesis of c-type cytochromes; once thought to export heme, this seems not to be the case, but its exact role is uncertain. Responsible for energy coupling to the transport system. This Ruegeria sp. (strain TM1040) (Silicibacter sp.) protein is Cytochrome c biogenesis ATP-binding export protein CcmA.